The following is a 585-amino-acid chain: Aspartate--tRNA ligase (585 aa).

An L-aspartate-binding site is contributed by E173. Positions 197 to 200 are aspartate; that stretch reads QTLK. L-aspartate is bound at residue R219. ATP contacts are provided by residues 219–221 and Q228; that span reads RDE. H446 lines the L-aspartate pocket. E480 contacts ATP. Residue R487 participates in L-aspartate binding. Position 532–535 (532–535) interacts with ATP; the sequence is GLDR.

The protein belongs to the class-II aminoacyl-tRNA synthetase family. Type 1 subfamily. In terms of assembly, homodimer.

It is found in the cytoplasm. The enzyme catalyses tRNA(Asp) + L-aspartate + ATP = L-aspartyl-tRNA(Asp) + AMP + diphosphate. Functionally, catalyzes the attachment of L-aspartate to tRNA(Asp) in a two-step reaction: L-aspartate is first activated by ATP to form Asp-AMP and then transferred to the acceptor end of tRNA(Asp). The sequence is that of Aspartate--tRNA ligase from Bacteroides fragilis (strain YCH46).